A 95-amino-acid polypeptide reads, in one-letter code: HssA/B-like protein 45 (95 aa).

Residues methionine 1–serine 31 are disordered.

It belongs to the hssA/B family.

The protein is HssA/B-like protein 45 (hssl45) of Dictyostelium discoideum (Social amoeba).